Reading from the N-terminus, the 223-residue chain is Adenylate kinase (223 aa).

10 to 15 (GSGKGT) is an ATP binding site. Residues 30 to 59 (ESGAIFREHIGGGTELGKQAKAFIERGDLV) are NMP. AMP-binding positions include Ser-31, Arg-36, 57–59 (DLV), 84–87 (GFPR), and Gln-91. The LID stretch occupies residues 125–164 (GRRLCKNDNNHPNNIFIDAIKPNGDVCRVCGGELSARSDD). Arg-126 contacts ATP. Positions 161 and 173 each coordinate AMP. An ATP-binding site is contributed by Gly-209.

Belongs to the adenylate kinase family. As to quaternary structure, monomer.

The protein resides in the cytoplasm. It carries out the reaction AMP + ATP = 2 ADP. It participates in purine metabolism; AMP biosynthesis via salvage pathway; AMP from ADP: step 1/1. Functionally, catalyzes the reversible transfer of the terminal phosphate group between ATP and AMP. Plays an important role in cellular energy homeostasis and in adenine nucleotide metabolism. This Nitratidesulfovibrio vulgaris (strain ATCC 29579 / DSM 644 / CCUG 34227 / NCIMB 8303 / VKM B-1760 / Hildenborough) (Desulfovibrio vulgaris) protein is Adenylate kinase.